The primary structure comprises 74 residues: Cytoplasmic envelopment protein 3 (74 aa).

Glycine 2 is lipidated: N-myristoyl glycine; by host. The short motif at 15–16 is the Di-leucine-like internalization motif element; that stretch reads LV. The tract at residues 34–40 is asp/Glu-rich (acidic); the sequence is SMEEFDI. Residues 36–74 form a disordered region; sequence EEFDIPPPPPLPKPVFKQPGPYKIPARSQRCPSKRRDPY.

It belongs to the herpesviridae cytoplasmic envelopment protein 3 family. Interacts with cytoplasmic envelopment protein 2; this interaction is essential for the proper localization of each protein to the assembly complex and thus for the production of infectious virus. Myristoylation and palmitoylation (probably on one or more of the nearby cysteines at the N-terminus) enable membrane-binding and Golgi apparatus-specific targeting and are essential for efficient packaging. In terms of processing, phosphorylated. Phosphorylation does not seem to be required for recycling to the host Golgi apparatus. Packaging is selective for underphosphorylated forms.

It is found in the virion tegument. It localises to the virion membrane. The protein localises to the host cell membrane. The protein resides in the host Golgi apparatus membrane. Functionally, plays an important role in the cytoplasmic envelopment of tegument proteins and capsids during the assembly and egress processes. Also participates in viral entry at the fusion step probably by regulating the core fusion machinery. The sequence is that of Cytoplasmic envelopment protein 3 from Equine herpesvirus 1 (strain Ab4p) (EHV-1).